Reading from the N-terminus, the 586-residue chain is Regulatory protein NPR3 (586 aa).

A Phosphoserine modification is found at Ser10. One can recognise a BTB domain in the interval 60 to 135 (SDAEIIVDGV…IYTGRLKPFP (76 aa)). Residues 138 to 152 (VSTCVDPVCSHDCCR) form a C2HC NPR-type zinc finger. 4 residues coordinate Zn(2+): Cys141, Cys146, His148, and Cys151. 3 ANK repeats span residues 261 to 291 (ERIG…TLDQ), 293 to 320 (NGLH…DVNY), and 324 to 353 (RGYT…NASE). Residues 383–523 (ESSKARLCID…MAEYIDDDIL (141 aa)) form a salicylic acid-binding core (SBC) region. Position 428 (Arg428) interacts with salicylate. The interval 554–586 (YSKDKESKIARSCLSASSSPSSSSIRDDLHNTT) is disordered. The segment covering 565–577 (SCLSASSSPSSSS) has biased composition (low complexity).

It belongs to the plant 'ANKYRIN-BTB/POZ' family. 'NPR1-like' subfamily. Forms homodimers and heterodimers with NPR4 in the presence of salicylic acid (SA). Interacts with TGA2, TGA3, TGA5 and TGA6. Interacts with CUL3A, a core component of the cullin-RING ubiquitin ligases (CRL). Interacts with TGA2 in vivo in the nucleus. Binds to NPR1; this interaction is promoted by association with SA, probably due to conformational changes.

It is found in the nucleus. The protein operates within protein modification; protein ubiquitination. Its function is as follows. Salicylic acid (SA)-binding substrate-specific adapter of an E3 ubiquitin-protein ligase complex (CUL3-RBX1-BTB) which mediates the ubiquitination and subsequent proteasomal degradation of NPR1 in response to SA. Together with NPR4, acts as receptor of salicylic acid to monitor immunity in a NPR1-dependent manner and induce systemic acquired resistance (SAR). Involved in the regulation of basal defense responses against pathogens, and may be implicated in the cross-talk between the SA- and JA-dependent signaling pathways. In Arabidopsis thaliana (Mouse-ear cress), this protein is Regulatory protein NPR3.